A 107-amino-acid chain; its full sequence is uncharacterized protein (107 aa).

3 helical membrane passes run 15–35 (TGSYNWFDHFFLCVYLALGIS), 43–63 (LYRVCFIFLFTGGFFLFWLSY), and 87–107 (YFPSSTWIAVLVFSWRHIFCF).

It localises to the membrane. This is an uncharacterized protein from Saccharomyces cerevisiae (strain ATCC 204508 / S288c) (Baker's yeast).